A 380-amino-acid polypeptide reads, in one-letter code: Protein phosphatase methylesterase 1 (380 aa).

Positions M1–K38 are disordered. Residue S15 is modified to Phosphoserine. An Asymmetric dimethylarginine; alternate modification is found at R16. R16 carries the post-translational modification Omega-N-methylarginine; alternate. Position 42 is a phosphoserine (S42). Residues S156 and D181 contribute to the active site. The span at I255 to S265 shows a compositional bias: acidic residues. Residues I255–K280 are disordered. Residues V268–K280 show a composition bias toward basic and acidic residues. The active site involves H349.

The protein belongs to the AB hydrolase superfamily. In terms of assembly, binds PPP2CA and PPP2CB. Phosphorylated by SIK1 following increases in intracellular sodium, leading to dissociation from the protein phosphatase 2A (PP2A) complex and subsequent dephosphorylation of sodium/potassium-transporting ATPase ATP1A1.

The enzyme catalyses [phosphatase 2A protein]-C-terminal L-leucine methyl ester + H2O = [phosphatase 2A protein]-C-terminal L-leucine + methanol + H(+). Functionally, demethylates proteins that have been reversibly carboxymethylated. Demethylates PPP2CB (in vitro) and PPP2CA. Binding to PPP2CA displaces the manganese ion and inactivates the enzyme. The polypeptide is Protein phosphatase methylesterase 1 (PPME1) (Bos taurus (Bovine)).